The primary structure comprises 339 residues: Biotin synthase (339 aa).

Positions 51–278 (TEVELATLLS…KARVRLSAGR (228 aa)) constitute a Radical SAM core domain. [4Fe-4S] cluster is bound by residues C66, C70, and C73. Residues C110, C141, C201, and R273 each contribute to the [2Fe-2S] cluster site.

It belongs to the radical SAM superfamily. Biotin synthase family. As to quaternary structure, homodimer. The cofactor is [4Fe-4S] cluster. It depends on [2Fe-2S] cluster as a cofactor.

The catalysed reaction is (4R,5S)-dethiobiotin + (sulfur carrier)-SH + 2 reduced [2Fe-2S]-[ferredoxin] + 2 S-adenosyl-L-methionine = (sulfur carrier)-H + biotin + 2 5'-deoxyadenosine + 2 L-methionine + 2 oxidized [2Fe-2S]-[ferredoxin]. It functions in the pathway cofactor biosynthesis; biotin biosynthesis; biotin from 7,8-diaminononanoate: step 2/2. Catalyzes the conversion of dethiobiotin (DTB) to biotin by the insertion of a sulfur atom into dethiobiotin via a radical-based mechanism. The sequence is that of Biotin synthase from Janthinobacterium sp. (strain Marseille) (Minibacterium massiliensis).